We begin with the raw amino-acid sequence, 504 residues long: 2-isopropylmalate synthase (504 aa).

Residues 6-267 (IIVFDTTLRD…YTDINFKEIY (262 aa)) form the Pyruvate carboxyltransferase domain. Residues Asp-15, His-201, His-203, and Asn-237 each contribute to the Mn(2+) site. The interval 391–504 (EIIALSSSEC…ALNSYISMKQ (114 aa)) is regulatory domain.

It belongs to the alpha-IPM synthase/homocitrate synthase family. LeuA type 1 subfamily. As to quaternary structure, homodimer. Mn(2+) serves as cofactor.

The protein resides in the cytoplasm. It catalyses the reaction 3-methyl-2-oxobutanoate + acetyl-CoA + H2O = (2S)-2-isopropylmalate + CoA + H(+). Its pathway is amino-acid biosynthesis; L-leucine biosynthesis; L-leucine from 3-methyl-2-oxobutanoate: step 1/4. Catalyzes the condensation of the acetyl group of acetyl-CoA with 3-methyl-2-oxobutanoate (2-ketoisovalerate) to form 3-carboxy-3-hydroxy-4-methylpentanoate (2-isopropylmalate). This Campylobacter hominis (strain ATCC BAA-381 / DSM 21671 / CCUG 45161 / LMG 19568 / NCTC 13146 / CH001A) protein is 2-isopropylmalate synthase.